An 857-amino-acid polypeptide reads, in one-letter code: Protein dalmatian (857 aa).

2 disordered regions span residues 1–50 and 146–194; these read MVRT…KLSI and VQKS…FFHR. Polar residues-rich tracts occupy residues 146–156 and 165–176; these read VQKSTQPQNIK and SPCQQRIRSKSP. Residues Ser173, Ser175, Ser184, and Ser222 each carry the phosphoserine modification. Residues 251–271 show a composition bias toward basic residues; it reads GKPRAKRTAKKVRPVGNRRKV. The segment at 251–281 is disordered; sequence GKPRAKRTAKKVRPVGNRRKVSTKDNEPEPV. The residue at position 405 (Ser405) is a Phosphoserine. Disordered stretches follow at residues 470–514 and 737–830; these read SICP…NAEN and PPRP…RDIE. Positions 771-781 are enriched in basic and acidic residues; the sequence is KQPRRTYVKER. The span at 797-806 shows a compositional bias: acidic residues; the sequence is SESEDEDEQD. Positions 807 to 816 are enriched in basic and acidic residues; sequence SHDKSLDSPE. The segment covering 817–826 has biased composition (basic residues); it reads KKRHHVKRPR.

The protein localises to the nucleus. It localises to the chromosome. Functionally, regulator of sister chromatid cohesion in mitosis. Probably involved in development of the central nervous system. The protein is Protein dalmatian (dmt) of Drosophila melanogaster (Fruit fly).